The chain runs to 296 residues: ATP phosphoribosyltransferase (296 aa).

Belongs to the ATP phosphoribosyltransferase family.

The protein localises to the cytoplasm. The enzyme catalyses 1-(5-phospho-beta-D-ribosyl)-ATP + diphosphate = 5-phospho-alpha-D-ribose 1-diphosphate + ATP. It functions in the pathway amino-acid biosynthesis; L-histidine biosynthesis; L-histidine from 5-phospho-alpha-D-ribose 1-diphosphate: step 1/9. Functionally, catalyzes the condensation of ATP and 5-phosphoribose 1-diphosphate to form N'-(5'-phosphoribosyl)-ATP (PR-ATP). Has a crucial role in the pathway because the rate of histidine biosynthesis seems to be controlled primarily by regulation of the enzymatic activity. The chain is ATP phosphoribosyltransferase (HIS1) from Yarrowia lipolytica (strain CLIB 122 / E 150) (Yeast).